Reading from the N-terminus, the 95-residue chain is Co-chaperonin GroES (95 aa).

The protein belongs to the GroES chaperonin family. Heptamer of 7 subunits arranged in a ring. Interacts with the chaperonin GroEL.

It is found in the cytoplasm. Functionally, together with the chaperonin GroEL, plays an essential role in assisting protein folding. The GroEL-GroES system forms a nano-cage that allows encapsulation of the non-native substrate proteins and provides a physical environment optimized to promote and accelerate protein folding. GroES binds to the apical surface of the GroEL ring, thereby capping the opening of the GroEL channel. The protein is Co-chaperonin GroES of Maricaulis maris (strain MCS10) (Caulobacter maris).